Consider the following 182-residue polypeptide: Glycerol-3-phosphate acyltransferase 1 (182 aa).

Transmembrane regions (helical) follow at residues 5–25 (MQFL…AYIV), 54–74 (GYFV…VSIA), 81–101 (STFL…PILF), 117–137 (IAFD…FYLI), and 157–177 (ILYS…VLIL).

Belongs to the PlsY family. Probably interacts with PlsX.

It is found in the cell membrane. It catalyses the reaction an acyl phosphate + sn-glycerol 3-phosphate = a 1-acyl-sn-glycero-3-phosphate + phosphate. It functions in the pathway lipid metabolism; phospholipid metabolism. Catalyzes the transfer of an acyl group from acyl-phosphate (acyl-PO(4)) to glycerol-3-phosphate (G3P) to form lysophosphatidic acid (LPA). This enzyme utilizes acyl-phosphate as fatty acyl donor, but not acyl-CoA or acyl-ACP. In Bacillus thuringiensis subsp. konkukian (strain 97-27), this protein is Glycerol-3-phosphate acyltransferase 1.